The sequence spans 178 residues: UPF0302 protein BcerKBAB4_1445 (178 aa).

This sequence belongs to the UPF0302 family.

The chain is UPF0302 protein BcerKBAB4_1445 from Bacillus mycoides (strain KBAB4) (Bacillus weihenstephanensis).